Here is a 393-residue protein sequence, read N- to C-terminus: Arginine biosynthesis bifunctional protein ArgJ (393 aa).

Residues Thr143, Lys168, Thr179, Glu265, Asn388, and Thr393 each contribute to the substrate site. Residue Thr179 is the Nucleophile of the active site.

This sequence belongs to the ArgJ family. Heterotetramer of two alpha and two beta chains.

It is found in the cytoplasm. The catalysed reaction is N(2)-acetyl-L-ornithine + L-glutamate = N-acetyl-L-glutamate + L-ornithine. It carries out the reaction L-glutamate + acetyl-CoA = N-acetyl-L-glutamate + CoA + H(+). It participates in amino-acid biosynthesis; L-arginine biosynthesis; L-ornithine and N-acetyl-L-glutamate from L-glutamate and N(2)-acetyl-L-ornithine (cyclic): step 1/1. The protein operates within amino-acid biosynthesis; L-arginine biosynthesis; N(2)-acetyl-L-ornithine from L-glutamate: step 1/4. Its function is as follows. Catalyzes two activities which are involved in the cyclic version of arginine biosynthesis: the synthesis of N-acetylglutamate from glutamate and acetyl-CoA as the acetyl donor, and of ornithine by transacetylation between N(2)-acetylornithine and glutamate. This is Arginine biosynthesis bifunctional protein ArgJ from Syntrophotalea carbinolica (strain DSM 2380 / NBRC 103641 / GraBd1) (Pelobacter carbinolicus).